The following is a 278-amino-acid chain: Tumor necrosis factor ligand superfamily member 6 (278 aa).

Topologically, residues 1–77 (MQQPVNYPCP…SPLKKKDNIE (77 aa)) are cytoplasmic. The tract at residues 26 to 68 (PGSVFSCPSSGPRGPGQRRPPPPPPPPSPLPPPSQPPPLPPLS) is disordered. The span at 33–42 (PSSGPRGPGQ) shows a compositional bias: low complexity. Residues 43–68 (RRPPPPPPPPSPLPPPSQPPPLPPLS) are compositionally biased toward pro residues. A helical; Signal-anchor for type II membrane protein transmembrane segment spans residues 78–99 (LWLPVIFFMVLVALVGMGLGMY). The Extracellular portion of the chain corresponds to 100–278 (QLFHLQKELA…SKTFFGLYKL (179 aa)). N116 carries an N-linked (GlcNAc...) asparagine glycan. Over residues 125–135 (EKQIANPSTPS) the composition is skewed to polar residues. Residues 125–147 (EKQIANPSTPSETKKPRSVAHLT) form a disordered region. The region spanning 142–278 (SVAHLTGNPR…SKTFFGLYKL (137 aa)) is the THD domain. C199 and C230 are disulfide-bonded. N-linked (GlcNAc...) asparagine glycans are attached at residues N247 and N257.

The protein belongs to the tumor necrosis factor family. In terms of assembly, homotrimer. Interacts with ARHGAP9, BAIAP2L1, BTK, CACNB3, CACNB4, CRK, DLG2, DNMBP, DOCK4, EPS8L3, FGR, FYB1, FYN, HCK, ITK, ITSN2, KALRN, LYN, MACC1, MIA, MPP4, MYO15A, NCF1, NCK1, NCK2, NCKIPSD, OSTF1, PIK3R1, PSTPIP1, RIMBP3C, SAMSN1, SH3GL3, SH3PXD2B, SH3PXD2A, SH3RF2, SKAP2, SNX33, SNX9, SORBS3, SPTA1, SRC, SRGAP1, SRGAP2, SRGAP3, TEC, TJP3 and YES1. In terms of processing, the soluble form derives from the membrane form by proteolytic processing. The membrane-bound form undergoes two successive intramembrane proteolytic cleavages. The first one is processed by ADAM10 producing an N-terminal fragment, which lacks the receptor-binding extracellular domain. This ADAM10-processed FasL (FasL APL) remnant form is still membrane anchored and further processed by SPPL2A that liberates the FasL intracellular domain (FasL ICD). FasL shedding by ADAM10 is a prerequisite for subsequent intramembrane cleavage by SPPL2A in T-cells. Post-translationally, phosphorylated by FGR on tyrosine residues; this is required for ubiquitination and subsequent internalization. N-glycosylated. In terms of processing, monoubiquitinated. Expressed in activated splenocytes and thymocytes. Moderate or weak expression found in small intestines, kidney and lung.

It is found in the cell membrane. Its subcellular location is the cytoplasmic vesicle lumen. The protein localises to the lysosome lumen. The protein resides in the secreted. It localises to the nucleus. Functionally, cytokine that binds to TNFRSF6/FAS, a receptor that transduces the apoptotic signal into cells. Involved in cytotoxic T-cell-mediated apoptosis, natural killer cell-mediated apoptosis and in T-cell development. Initiates fratricidal/suicidal activation-induced cell death (AICD) in antigen-activated T-cells contributing to the termination of immune responses. TNFRSF6/FAS-mediated apoptosis also has a role in the induction of peripheral tolerance. Binds to TNFRSF6B/DcR3, a decoy receptor that blocks apoptosis. Induces FAS-mediated activation of NF-kappa-B, initiating non-apoptotic signaling pathways. Can induce apoptosis but does not appear to be essential for this process. Its function is as follows. Cytoplasmic form induces gene transcription inhibition. The chain is Tumor necrosis factor ligand superfamily member 6 (Faslg) from Rattus norvegicus (Rat).